The chain runs to 514 residues: MTLQDEIKKRRTFAIISHPDAGKTTITEQLLYFGGEIREAGTVKGKKSGTFAKSDWMDIEKQRGISVTSSVMQFDYAGKRVNILDTPGHEDFSEDTYRTLMAVDAAVMVVDSAKGIEAQTKKLFEVVKHRNIPVFTFINKLDRDGREPLDLLEELEEVLGIASYPMNWPIGMGKSFEGLYDLHNKRLELYKGDERFASIEDGDQLFANNPFYEQVKEDIELLQEAGNDFSEQAILDGDLTPVFFGSALTNFGVQTFLDTFLEFAPEPHGHKTTEGNVIDPLAKDFSGFVFKIQANMDPRHRDRIAFVRIVSGEFERGMGVNLTRTGKGAKLSNVTQFMAESRENVTNAVAGDIIGVYDTGTYQVGDTLTVGKNKFEFEPLPTFTPELFMKVSAKNVMKQKSFHKGIEQLVQEGAIQLYKNYQTGEYMLGAVGQLQFEVFKHRMEGEYNAEVVMTPMGKKTVRWINSDDLDERMSSSRNILAKDRFDQPVFLFENDFALRWFADKYPDVKLEEKM.

The region spanning 8–268 (KKRRTFAIIS…TFLEFAPEPH (261 aa)) is the tr-type G domain. Residues 17–24 (SHPDAGKT), 85–89 (DTPGH), and 139–142 (NKLD) each bind GTP.

The protein belongs to the TRAFAC class translation factor GTPase superfamily. Classic translation factor GTPase family. PrfC subfamily.

It is found in the cytoplasm. In terms of biological role, increases the formation of ribosomal termination complexes and stimulates activities of RF-1 and RF-2. It binds guanine nucleotides and has strong preference for UGA stop codons. It may interact directly with the ribosome. The stimulation of RF-1 and RF-2 is significantly reduced by GTP and GDP, but not by GMP. The chain is Peptide chain release factor 3 from Streptococcus agalactiae serotype Ia (strain ATCC 27591 / A909 / CDC SS700).